The primary structure comprises 255 residues: Pimeloyl-[acyl-carrier protein] methyl ester esterase (255 aa).

One can recognise an AB hydrolase-1 domain in the interval 16 to 241; the sequence is LVLLHGWGMN…QSSHAPFMTE (226 aa). Residues Trp22, 82-83, and 143-147 contribute to the substrate site; these read SL and FMALQ. Ser82 (nucleophile) is an active-site residue. Active-site residues include Asp207 and His235. Position 235 (His235) interacts with substrate.

It belongs to the AB hydrolase superfamily. Carboxylesterase BioH family. As to quaternary structure, monomer.

The protein resides in the cytoplasm. The catalysed reaction is 6-carboxyhexanoyl-[ACP] methyl ester + H2O = 6-carboxyhexanoyl-[ACP] + methanol + H(+). The protein operates within cofactor biosynthesis; biotin biosynthesis. The physiological role of BioH is to remove the methyl group introduced by BioC when the pimeloyl moiety is complete. It allows to synthesize pimeloyl-ACP via the fatty acid synthetic pathway through the hydrolysis of the ester bonds of pimeloyl-ACP esters. The protein is Pimeloyl-[acyl-carrier protein] methyl ester esterase of Vibrio parahaemolyticus serotype O3:K6 (strain RIMD 2210633).